A 622-amino-acid polypeptide reads, in one-letter code: MKEALEPAKKRTRGLGAVTKIDTSRSKGPLLSSLSQPQGPTAAQKGPKKTGPRGCTAVGSVLKNQKLAPTAPAQKPVRKRPGKRPDWDLKGQLCDLTEELKCYREKTQKLDQENQGLQEQLKEAQEQAAALGTERNTLEGELASVRTQAEQCQQKLEALCARVLELEEWLGTKENLIQELQKEQLELQEERKALATRLEEQERRLQASEAALLSNESEVVCLRQKTAAQVTLLAEQGDRLHGLEMERRRLHNQLQELKGNIRVFCRVRPVLAGEPTPSPGFLLFPHGPAGPSDPPTRLSLSRSDDRRSTLTRAPAPTTRHDFSFDRVFPPGSKQEEVFEEISMLVQSALDGYPVCIFAYGQTGSGKTFTMEGRPGGDPQLEGLIPRRMRHLFSVAQEMSGQGWTYSFVASYVEIYNETVRDLLATGTRKGQGECEIRRARPGSEELTVTNARYVPVSCEREVEALLHLAHQNRAVARTAQNERSSRSHSVFQLQISGEHAARGLQCVAPLNLVDLAGSERLDPGLTLGPGERDRLRETQSINSSLSTLGLVIMALSNKESHVPYRNSKLTYLLQNSLGGSAKMLMFVNISPLEENVSESLNSLRFASKVNQCVIGTAQANKK.

The segment at 1–88 (MKEALEPAKK…KRPGKRPDWD (88 aa)) is disordered. Over residues 32–41 (SSLSQPQGPT) the composition is skewed to polar residues. Residues 95–264 (DLTEELKCYR…QELKGNIRVF (170 aa)) adopt a coiled-coil conformation. The region spanning 260–612 (NIRVFCRVRP…LRFASKVNQC (353 aa)) is the Kinesin motor domain. The interval 279–323 (PGFLLFPHGPAGPSDPPTRLSLSRSDDRRSTLTRAPAPTTRHDFS) is disordered. A Phosphothreonine modification is found at T309. 360–367 (GQTGSGKT) is an ATP binding site.

The protein belongs to the TRAFAC class myosin-kinesin ATPase superfamily. Kinesin family. NCD subfamily. In terms of assembly, binds NUBP1 and NUBP2. Interacts with PPP1R42.

The protein localises to the nucleus. The protein resides in the cytoplasm. It localises to the cytoskeleton. Its subcellular location is the microtubule organizing center. It is found in the centrosome. The protein localises to the spindle. The protein resides in the early endosome. Functionally, minus end-directed microtubule-dependent motor required for bipolar spindle formation. May contribute to movement of early endocytic vesicles. Regulates cilium formation and structure. The sequence is that of Kinesin-like protein KIFC1 from Cricetulus griseus (Chinese hamster).